Consider the following 689-residue polypeptide: Ataxin-1-like (689 aa).

The span at Met1–Leu19 shows a compositional bias: basic and acidic residues. Disordered stretches follow at residues Met1–Ser46, Ala185–Ala223, and Leu242–Gln297. An interaction with NCOR2 and ATXN1 region spans residues Pro20–Ser197. Positions Pro20–Ser197 are self-association. Polar residues-rich tracts occupy residues Arg28–Ser43 and Lys200–Pro219. Residues Gln257–Ala268 show a composition bias toward low complexity. A compositionally biased stretch (basic and acidic residues) spans Arg273–Glu285. Ser284 bears the Phosphoserine mark. Thr330 bears the Phosphothreonine mark. Positions Lys357 to Lys405 are disordered. Ser361 carries the post-translational modification Phosphoserine. Positions Pro457–Asn588 constitute an AXH domain. Ser615 carries the phosphoserine modification. The segment at Glu617–Cys647 is disordered.

Belongs to the ATXN1 family. As to quaternary structure, homodimer. Interacts with CIC. Interacts (via AXH domain) with NCOR2. Interacts with ATXN1. Directly interacts with RBPJ; this interaction is disrupted in the presence of Notch intracellular domain. Competes with ATXN1 for RBPJ-binding. Found in a complex with CIC and ATXN1. Expressed in cerebellum and cerebral cortex.

It localises to the nucleus. The protein resides in the cell projection. Its subcellular location is the dendrite. Chromatin-binding factor that repress Notch signaling in the absence of Notch intracellular domain by acting as a CBF1 corepressor. Binds to the HEY promoter and might assist, along with NCOR2, RBPJ-mediated repression. Can suppress ATXN1 cytotoxicity in spinocerebellar ataxia type 1 (SCA1). In concert with CIC and ATXN1, involved in brain development. In Homo sapiens (Human), this protein is Ataxin-1-like (ATXN1L).